The primary structure comprises 340 residues: Phenylalanine--tRNA ligase alpha subunit (340 aa).

Glu-255 serves as a coordination point for Mg(2+).

This sequence belongs to the class-II aminoacyl-tRNA synthetase family. Phe-tRNA synthetase alpha subunit type 1 subfamily. Tetramer of two alpha and two beta subunits. Requires Mg(2+) as cofactor.

The protein resides in the cytoplasm. It carries out the reaction tRNA(Phe) + L-phenylalanine + ATP = L-phenylalanyl-tRNA(Phe) + AMP + diphosphate + H(+). The sequence is that of Phenylalanine--tRNA ligase alpha subunit from Desulfitobacterium hafniense (strain DSM 10664 / DCB-2).